The primary structure comprises 487 residues: L-tartrate/succinate antiporter (487 aa).

The next 14 membrane-spanning stretches (helical) occupy residues 10–30 (YLAPLAVIAIIALLPLPAGLE), 33–53 (TWLYFAVFTGVIVGLILEPVP), 54–74 (GAVVAMVGISIIAILSPWLLF), 93–113 (WAVSGFSNSVIWLIFAAFMFG), 137–157 (TLFLGYAVMFSELILAPVTPS), 189–209 (IGSYIMWMGIVADCVTSAIFL), 236–256 (FLGMLPLSILLVLLVPWLAYV), 292–312 (LMVGALVLWIFGGDYIDAAMV), 313–333 (GYSVVALMLLLRIICWDDIVS), 340–360 (VFFWLASLITLATGLNNTGFI), 370–390 (SLSGYSPTIVMVALIVVFYLL), 393–413 (FFASATAYTSALAPMMIAAAL), 418–438 (IPLPVFCLMVGAAIGLGSILT), and 462–482 (LGAIFGLIFLVLLVITGLLWM).

The protein belongs to the SLC13A/DASS transporter (TC 2.A.47) family. DIT1 subfamily.

The protein resides in the cell inner membrane. It carries out the reaction (2R,3R)-tartrate(out) + succinate(in) = (2R,3R)-tartrate(in) + succinate(out). Its function is as follows. Catalyzes the uptake of tartrate in exchange for intracellular succinate. Essential for anaerobic L-tartrate fermentation. The polypeptide is L-tartrate/succinate antiporter (ttdT) (Escherichia coli O6:H1 (strain CFT073 / ATCC 700928 / UPEC)).